The chain runs to 806 residues: 85/88 kDa calcium-independent phospholipase A2 (806 aa).

ANK repeat units lie at residues 120 to 147, 151 to 181, 185 to 215, 219 to 248, 251 to 281, 286 to 312, 316 to 345, 349 to 378, and 382 to 403; these read WSVAHLAVELGIRECFHHSRIISCANCA, EGCTPLHLACRKGDGEILVELVQYCHTQMDV, KGETVFHYAVQGDNSQVLQLLGRNAVAGLNQ, QGLTPLHLACQLGKQEMVRVLLLCNARCNI, PNGYPIHSAMKFSQKGCAEMIISMDSSQIHS, YGASPLHWAKNAEMARMLLKRGCNVNS, AGNTALHVAVMRNRFDCAIVLLTHGANADA, HGNTPLHLAMSKDNVEMIKALIVFGAEVDT, and FGETPTFLASKIGRLVTRKAIL. 2 helical membrane passes run 480-500 and 511-531; these read LLCLDGGGVKGLIIIQLLIAI and LFDWVAGTSTGGILALAILHS. Residues 481–665 form the PNPLA domain; it reads LCLDGGGVKG…LANNPTLDAM (185 aa). Positions 485 to 490 match the GXGXXG motif; it reads GGGVKG. The short motif at 517–521 is the GXSXG element; sequence GTSTG. The active-site Nucleophile is the S519. The active-site Proton acceptor is the D652. A DGA/G motif is present at residues 652 to 654; it reads DGG. The tract at residues 677–686 is calmodulin-binding (1-9-14 motif); that stretch reads RKGQANKVKK. The tract at residues 748–759 is calmodulin-binding (IQ motif); that stretch reads AWCEMVGIQYFR.

As to quaternary structure, homodimer formed by catalytic domains tightly interacting through a large hydrophobic interface. The contact area involves 3 alpha helices, several loops and a part of the beta sheet from each monomer. Both active sites of the dimer are in close proximity adopting an open conformation that provide sufficient space for phospholipid access and favoring cooperativity in deacylation-reacylation reactions. Each monomer has 9 ankyrin repeats stacked side-by-side in an elongated structure oriented outwards from the catalytic core. In terms of tissue distribution, four different transcripts were found to be expressed in a distinct tissue distribution.

It is found in the cytoplasm. The protein localises to the cell membrane. The protein resides in the mitochondrion. Its subcellular location is the cell projection. It localises to the pseudopodium. It catalyses the reaction a 1,2-diacyl-sn-glycero-3-phosphocholine + H2O = a 1-acyl-sn-glycero-3-phosphocholine + a fatty acid + H(+). The enzyme catalyses a 1-O-alkyl-2-acyl-sn-glycero-3-phosphocholine + H2O = a 1-O-alkyl-sn-glycero-3-phosphocholine + a fatty acid + H(+). It carries out the reaction 1,2-dihexadecanoyl-sn-glycero-3-phosphocholine + H2O = 1-hexadecanoyl-sn-glycero-3-phosphocholine + hexadecanoate + H(+). The catalysed reaction is 1-hexadecanoyl-2-(9Z-octadecenoyl)-sn-glycero-3-phosphocholine + H2O = 1-hexadecanoyl-sn-glycero-3-phosphocholine + (9Z)-octadecenoate + H(+). It catalyses the reaction 1-hexadecanoyl-2-(9Z,12Z-octadecadienoyl)-sn-glycero-3-phosphocholine + H2O = (9Z,12Z)-octadecadienoate + 1-hexadecanoyl-sn-glycero-3-phosphocholine + H(+). The enzyme catalyses 1-hexadecanoyl-2-(5Z,8Z,11Z,14Z-eicosatetraenoyl)-sn-glycero-3-phosphocholine + H2O = 1-hexadecanoyl-sn-glycero-3-phosphocholine + (5Z,8Z,11Z,14Z)-eicosatetraenoate + H(+). It carries out the reaction 1-octadecanoyl-2-(5Z,8Z,11Z,14Z-eicosatetraenoyl)-sn-glycero-3-phosphocholine + H2O = 1-octadecanoyl-sn-glycero-3-phosphocholine + (5Z,8Z,11Z,14Z)-eicosatetraenoate + H(+). The catalysed reaction is 1-hexadecanoyl-2-(5Z,8Z,11Z,14Z-eicosatetraenoyl)-sn-glycero-3-phosphoethanolamine + H2O = 1-hexadecanoyl-sn-glycero-3-phosphoethanolamine + (5Z,8Z,11Z,14Z)-eicosatetraenoate + H(+). It catalyses the reaction 1,2-dihexadecanoyl-sn-glycero-3-phosphate + H2O = 1-hexadecanoyl-sn-glycero-3-phosphate + hexadecanoate + H(+). The enzyme catalyses a 1-acyl-sn-glycero-3-phosphocholine + H2O = sn-glycerol 3-phosphocholine + a fatty acid + H(+). It carries out the reaction 1-hexadecanoyl-sn-glycero-3-phosphocholine + H2O = sn-glycerol 3-phosphocholine + hexadecanoate + H(+). The catalysed reaction is 1-(5Z,8Z,11Z,14Z-eicosatetraenoyl)-sn-glycero-3-phosphocholine + H2O = sn-glycerol 3-phosphocholine + (5Z,8Z,11Z,14Z)-eicosatetraenoate + H(+). It catalyses the reaction 2-(5Z,8Z,11Z,14Z)-eicosatetraenoyl-sn-glycero-3-phosphocholine + H2O = sn-glycerol 3-phosphocholine + (5Z,8Z,11Z,14Z)-eicosatetraenoate + H(+). The enzyme catalyses 1-O-hexadecyl-2-(5Z,8Z,11Z,14Z)-eicosatetraenoyl-sn-glycero-3-phosphocholine + H2O = 1-O-hexadecyl-sn-glycero-3-phosphocholine + (5Z,8Z,11Z,14Z)-eicosatetraenoate + H(+). It carries out the reaction 1-O-hexadecyl-2-acetyl-sn-glycero-3-phosphocholine + H2O = 1-O-hexadecyl-sn-glycero-3-phosphocholine + acetate + H(+). The catalysed reaction is hexadecanoyl-CoA + H2O = hexadecanoate + CoA + H(+). It catalyses the reaction 1',3'-bis[1,2-di-(9Z-octadecenoyl)-sn-glycero-3-phospho]-glycerol + H2O = 1'-[1,2-di-(9Z-octadecenoyl)-sn-glycero-3-phospho]-3'-[1-(9Z-octadecenoyl)-sn-glycero-3-phospho]-glycerol + (9Z)-octadecenoate + H(+). The enzyme catalyses 1'-[1,2-di-(9Z-octadecenoyl)-sn-glycero-3-phospho]-3'-[1-(9Z-octadecenoyl)-sn-glycero-3-phospho]-glycerol + H2O = 1',3'-bis-[1-(9Z-octadecenoyl)-sn-glycero-3-phospho]-glycerol + (9Z)-octadecenoate + H(+). It carries out the reaction 1',3'-bis-[1,2-di-(9Z,12Z-octadecadienoyl)-sn-glycero-3-phospho]-glycerol + H2O = 1'-[1,2-di-(9Z,12Z-octadecadienoyl)-sn-glycero-3-phospho]-3'-[1-(9Z,12Z-octadecadienoyl)-sn-glycero-3-phospho]-glycerol + (9Z,12Z)-octadecadienoate + H(+). The catalysed reaction is 1-octadecanoyl-2-(15-hydroxy-(5Z,8Z,11Z,13E)-eicosatetraenoyl)-sn-glycero-3-phosphoethanolamine + H2O = 1-octadecanoyl-sn-glycero-3-phosphoethanolamine + 15-hydroxy-(5Z,8Z,11Z,13E)-eicosatetraenoate + H(+). Activated by ATP. Inhibited by calcium-activated calmodulin. Inhibited by bromoenol lactone (BEL). Its function is as follows. Calcium-independent phospholipase involved in phospholipid remodeling with implications in cellular membrane homeostasis, mitochondrial integrity and signal transduction. Hydrolyzes the ester bond of the fatty acyl group attached at sn-1 or sn-2 position of phospholipids (phospholipase A1 and A2 activity respectively), producing lysophospholipids that are used in deacylation-reacylation cycles. Hydrolyzes both saturated and unsaturated long fatty acyl chains in various glycerophospholipid classes such as phosphatidylcholines, phosphatidylethanolamines and phosphatidates, with a preference for hydrolysis at sn-2 position. Can further hydrolyze lysophospholipids carrying saturated fatty acyl chains (lysophospholipase activity). Upon oxidative stress, contributes to remodeling of mitochondrial phospholipids in pancreatic beta cells, in a repair mechanism to reduce oxidized lipid content. Preferentially hydrolyzes oxidized polyunsaturated fatty acyl chains from cardiolipins, yielding monolysocardiolipins that can be reacylated with unoxidized fatty acyls to regenerate native cardiolipin species. Hydrolyzes oxidized glycerophosphoethanolamines present in pancreatic islets, releasing oxidized polyunsaturated fatty acids such as hydroxyeicosatetraenoates (HETEs). Has thioesterase activity toward fatty-acyl CoA releasing CoA-SH known to facilitate fatty acid transport and beta-oxidation in mitochondria particularly in skeletal muscle. Plays a role in regulation of membrane dynamics and homeostasis. Selectively hydrolyzes sn-2 arachidonoyl group in plasmalogen phospholipids, structural components of lipid rafts and myelin. Regulates F-actin polymerization at the pseudopods, which is required for both speed and directionality of MCP1/CCL2-induced monocyte chemotaxis. Targets membrane phospholipids to produce potent lipid signaling messengers. Generates lysophosphatidate (LPA, 1-acyl-glycerol-3-phosphate), which acts via G-protein receptors in various cell types. Has phospholipase A2 activity toward platelet-activating factor (PAF, 1-O-alkyl-2-acetyl-sn-glycero-3-phosphocholine), likely playing a role in inactivation of this potent pro-inflammatory signaling lipid. In response to glucose, amplifies calcium influx in pancreatic beta cells to promote INS secretion. In terms of biological role, lacks the catalytic domain and may act as a negative regulator of the catalytically active isoforms. In Homo sapiens (Human), this protein is 85/88 kDa calcium-independent phospholipase A2 (PLA2G6).